Consider the following 405-residue polypeptide: Pentatricopeptide repeat-containing protein At3g14580, mitochondrial (405 aa).

Residues 1–37 constitute a mitochondrion transit peptide; sequence MILRRLVLSATSNSNPRRSQSLSSSGVRILSSSSSDR. The tract at residues 13 to 44 is disordered; it reads NSNPRRSQSLSSSGVRILSSSSSDRYTSSSQR. 8 PPR repeats span residues 94-124, 130-165, 166-200, 201-235, 236-270, 271-305, 306-340, and 341-375; these read TESL…IKLE, SEEF…GCWP, SSKS…GVEI, DACC…KSRP, NVMT…RIEP, DTIT…GCEP, NPGT…GMRP, and SFLS…GFVP.

Belongs to the PPR family. P subfamily.

It is found in the mitochondrion. The protein is Pentatricopeptide repeat-containing protein At3g14580, mitochondrial of Arabidopsis thaliana (Mouse-ear cress).